The sequence spans 394 residues: Probable sugar efflux transporter (394 aa).

A run of 12 helical transmembrane segments spans residues 15 to 35 (VLML…PVGL), 50 to 70 (VGLM…PMML), 79 to 99 (MLLM…SVAW), 109 to 129 (IGIA…AIRV), 137 to 157 (QALS…LPIG), 168 to 188 (ITFA…LKLL), 209 to 229 (PALV…YTAY), 249 to 269 (FLLL…SIYG), 272 to 292 (FPAT…MCLY), 299 to 319 (LAVS…GLAV), 333 to 353 (VAMS…ALLG), and 362 to 382 (MASV…WCAW).

Belongs to the major facilitator superfamily. SotB (TC 2.A.1.2) family.

Its subcellular location is the cell inner membrane. Its function is as follows. Involved in the efflux of sugars. The physiological role may be the reduction of the intracellular concentration of toxic sugars or sugar metabolites. This Erwinia tasmaniensis (strain DSM 17950 / CFBP 7177 / CIP 109463 / NCPPB 4357 / Et1/99) protein is Probable sugar efflux transporter.